A 458-amino-acid polypeptide reads, in one-letter code: ATP synthase subunit beta (458 aa).

148–155 lines the ATP pocket; sequence GGAGVGKT.

The protein belongs to the ATPase alpha/beta chains family. As to quaternary structure, F-type ATPases have 2 components, CF(1) - the catalytic core - and CF(0) - the membrane proton channel. CF(1) has five subunits: alpha(3), beta(3), gamma(1), delta(1), epsilon(1). CF(0) has three main subunits: a(1), b(2) and c(9-12). The alpha and beta chains form an alternating ring which encloses part of the gamma chain. CF(1) is attached to CF(0) by a central stalk formed by the gamma and epsilon chains, while a peripheral stalk is formed by the delta and b chains.

The protein localises to the cell inner membrane. It carries out the reaction ATP + H2O + 4 H(+)(in) = ADP + phosphate + 5 H(+)(out). Its function is as follows. Produces ATP from ADP in the presence of a proton gradient across the membrane. The catalytic sites are hosted primarily by the beta subunits. The polypeptide is ATP synthase subunit beta (Pseudomonas entomophila (strain L48)).